A 967-amino-acid polypeptide reads, in one-letter code: RNA polymerase-associated protein RapA (967 aa).

The Helicase ATP-binding domain maps to 163-333 (EVGKRHNPRV…FARLRLLDPN (171 aa)). 176–183 (DEVGLGKT) provides a ligand contact to ATP. The short motif at 279–282 (DEAH) is the DEAH box element. Positions 489-660 (RVEWLLGFLT…NYLAQPNELG (172 aa)) constitute a Helicase C-terminal domain.

The protein belongs to the SNF2/RAD54 helicase family. RapA subfamily. Interacts with the RNAP. Has a higher affinity for the core RNAP than for the holoenzyme. Its ATPase activity is stimulated by binding to RNAP.

In terms of biological role, transcription regulator that activates transcription by stimulating RNA polymerase (RNAP) recycling in case of stress conditions such as supercoiled DNA or high salt concentrations. Probably acts by releasing the RNAP, when it is trapped or immobilized on tightly supercoiled DNA. Does not activate transcription on linear DNA. Probably not involved in DNA repair. The chain is RNA polymerase-associated protein RapA from Proteus mirabilis (strain HI4320).